The following is a 100-amino-acid chain: NADH-quinone oxidoreductase subunit K (100 aa).

The next 3 helical transmembrane spans lie at 2–22 (ITLS…LIGI), 29–49 (IMLF…LAAI), and 63–83 (LFIV…LILW).

This sequence belongs to the complex I subunit 4L family. As to quaternary structure, NDH-1 is composed of 14 different subunits. Subunits NuoA, H, J, K, L, M, N constitute the membrane sector of the complex.

It is found in the cell inner membrane. It catalyses the reaction a quinone + NADH + 5 H(+)(in) = a quinol + NAD(+) + 4 H(+)(out). Its function is as follows. NDH-1 shuttles electrons from NADH, via FMN and iron-sulfur (Fe-S) centers, to quinones in the respiratory chain. The immediate electron acceptor for the enzyme in this species is believed to be ubiquinone. Couples the redox reaction to proton translocation (for every two electrons transferred, four hydrogen ions are translocated across the cytoplasmic membrane), and thus conserves the redox energy in a proton gradient. The protein is NADH-quinone oxidoreductase subunit K of Campylobacter curvus (strain 525.92).